Consider the following 394-residue polypeptide: MTRGALKVTILLVGLGLVLAGSRPISDCGERIEDDGYPMERHEVVTSDNYILTMHRIPYSPKTGESSNRPVAFLMHGMLSSSSDWVLMGPERSLAYMLADAGYDVWMGNARGNTYSKAHKYWPTYWQIFWNFSWNEIGMYDVPAMIDYVLAKTGQQQVQYVGHSQGTTVYLVMVSERPEYNDKIKSAHLLGPAAYMGNMKSPLTRAFAPILGQPNAIVEVCGSMEFMPSNKFKQDLGIEMCQATSPYADMCANEIFLIGGYDTEQLDYELLEHIKATSPAGASVNQNLHFCQEYNSGKFRKFDYTALRNPYEYGSYFPPDYKLKNAKAPVLLYYGANDWMCDVSDVRKLRDELPNMALDYLVPFEKWAHLDFIWGTEARKYVYDEVLKQMQSYE.

Positions 1-20 (MTRGALKVTILLVGLGLVLA) are cleaved as a signal peptide. A glycan (N-linked (GlcNAc...) asparagine) is linked at N131. Catalysis depends on charge relay system residues S164 and H369.

This sequence belongs to the AB hydrolase superfamily. Lipase family. Fat body.

In Drosophila melanogaster (Fruit fly), this protein is Lipase 3 (Lip3).